The primary structure comprises 542 residues: MVWGLFPVDPLSGEDKYYIFSKGIYKVGRKGCDIIINKDKGVSRIHAELTFDATTVSTSRRNKSSSDTSSFVIRVKDCSKYGTFVKTDLGTKDKVHELSNKEKILQDGDVIAFGTGSAIYRLSLIPLVFYLCPSSETFKVDQPVQDAVSSIGARISPTLSEECTHVLLEPRMQVNEALINAILAKKTIILTNWVMLLAEKSICSEIPGYSQYRPSVMVEEALVDVLELNVREKCLEGFTFVLEPTDTYRFGCSFPSLLEVCGAETVTIEDISSMSQDSQFGEINRMICVIPKSAGDKFGRFKHLSLLSRVNEMDLVCAVFSGNLPSTSLIPPSVVISSSCSTDETVVADSEAEEEETTSSVHMIDATEKAETPEKPAAIVIEDSPVTILEETSNLNEFKSVNLLADTESRGHMDEKNSSDSVTIRRDRNDEAETGKSEIIYTQDLIVRDLRSTRKVQSTGGEGVVDFKRFRKGNVTCGNSFSSLIPFAKDPYKEYDSWDVTDFMKEEKKRKQMEAIAEDLFKTEKARKRGTAGSIRGFLSGS.

Residues 25-90 (YKVGRKGCDI…YGTFVKTDLG (66 aa)) enclose the FHA domain. Residues 119-195 (IYRLSLIPLV…KTIILTNWVM (77 aa)) enclose the BRCT domain. The interval 409-430 (SRGHMDEKNSSDSVTIRRDRND) is disordered. The tract at residues 465–500 (VDFKRFRKGNVTCGNSFSSLIPFAKDPYKEYDSWDV) is involved in MRE11-binding.

It belongs to the Nibrin family. Component of the MRN complex composed of two heterodimers RAD50 and MRE11 associated with a single NBS1.

It is found in the nucleus. It localises to the chromosome. Component of the MRN complex, which plays a central role in double-strand break (DSB) repair, DNA recombination, maintenance of telomere integrity and meiosis. The MRN complex is involved in the repair of DNA double-strand breaks (DSBs) via homologous recombination (HR), an error-free mechanism which primarily occurs during S and G2 phases. The complex (1) mediates the end resection of damaged DNA, which generates proper single-stranded DNA, a key initial steps in HR, and is (2) required for the recruitment of other repair factors and efficient activation of ATM and ATR upon DNA damage. The MRN complex possesses single-strand endonuclease activity and double-strand-specific 3'-5' exonuclease activity, which are provided by MRE11, to initiate end resection, which is required for single-strand invasion and recombination. Within the MRN complex, NBS1 acts as a protein-protein adapter, which specifically recognizes and binds phosphorylated proteins, promoting their recruitment to DNA damage sites. Recruits MRE11 and RAD50 components of the MRN complex to DSBs in response to DNA damage. The sequence is that of Nibrin homolog from Arabidopsis thaliana (Mouse-ear cress).